The primary structure comprises 1085 residues: Error-prone DNA polymerase (1085 aa).

The protein belongs to the DNA polymerase type-C family. DnaE2 subfamily.

It is found in the cytoplasm. It carries out the reaction DNA(n) + a 2'-deoxyribonucleoside 5'-triphosphate = DNA(n+1) + diphosphate. Functionally, DNA polymerase involved in damage-induced mutagenesis and translesion synthesis (TLS). It is not the major replicative DNA polymerase. The protein is Error-prone DNA polymerase of Symbiobacterium thermophilum (strain DSM 24528 / JCM 14929 / IAM 14863 / T).